The sequence spans 271 residues: Pyrroline-5-carboxylate reductase (271 aa).

This sequence belongs to the pyrroline-5-carboxylate reductase family.

Its subcellular location is the cytoplasm. The catalysed reaction is L-proline + NADP(+) = (S)-1-pyrroline-5-carboxylate + NADPH + 2 H(+). It carries out the reaction L-proline + NAD(+) = (S)-1-pyrroline-5-carboxylate + NADH + 2 H(+). The protein operates within amino-acid biosynthesis; L-proline biosynthesis; L-proline from L-glutamate 5-semialdehyde: step 1/1. Its function is as follows. Catalyzes the reduction of 1-pyrroline-5-carboxylate (PCA) to L-proline. This Staphylococcus aureus (strain Mu50 / ATCC 700699) protein is Pyrroline-5-carboxylate reductase.